The sequence spans 495 residues: Phenylalanine--tRNA ligase alpha subunit (495 aa).

L-phenylalanine is bound by residues T338, 377–379 (QLE), and Y417. A Mg(2+)-binding site is contributed by E419. F442 provides a ligand contact to L-phenylalanine.

Belongs to the class-II aminoacyl-tRNA synthetase family. Phe-tRNA synthetase alpha subunit type 2 subfamily. In terms of assembly, tetramer of two alpha and two beta subunits. Mg(2+) is required as a cofactor.

It localises to the cytoplasm. The enzyme catalyses tRNA(Phe) + L-phenylalanine + ATP = L-phenylalanyl-tRNA(Phe) + AMP + diphosphate + H(+). The protein is Phenylalanine--tRNA ligase alpha subunit of Methanosarcina mazei (strain ATCC BAA-159 / DSM 3647 / Goe1 / Go1 / JCM 11833 / OCM 88) (Methanosarcina frisia).